A 292-amino-acid polypeptide reads, in one-letter code: MSERYPIIAITGSSGAGTTSVTRTFENIFRREGVKSVVIEGDSFHRYDRAEMKVKMAEAERTGNMNFSHFGEENNLFGELENLFRSYAETGTGMHRHYLHSPEEAAPFGQEPGTFTQWEPLPADTDLLFYEGLHGGVVTDSVNVAQYPNLLIGVVPVINLEWIQKLWRDKKQRGYSTEAVTDTILRRMPDYVNYICPQFSRTHVNFQRVPCVDTSNPFISREIPAPDESMVVIRFANPKGIDFQYLLSMIHDSFMSRANTIVVPGGKMELAMQLIFTPFVLRMMERRKRAAQ.

12–20 contacts ATP; it reads GSSGAGTTS.

Belongs to the phosphoribulokinase family. Homooctamer.

The enzyme catalyses D-ribulose 5-phosphate + ATP = D-ribulose 1,5-bisphosphate + ADP + H(+). It participates in carbohydrate biosynthesis; Calvin cycle. This Cupriavidus necator (strain ATCC 17699 / DSM 428 / KCTC 22496 / NCIMB 10442 / H16 / Stanier 337) (Ralstonia eutropha) protein is Phosphoribulokinase, chromosomal (cfxP).